We begin with the raw amino-acid sequence, 723 residues long: Methionine--tRNA ligase (723 aa).

The 'HIGH' region signature appears at 12-22; that stretch reads PYANGDIHLGH. Zn(2+) is bound by residues cysteine 143, cysteine 146, cysteine 156, and cysteine 159. The 'KMSKS' region motif lies at 345 to 349; that stretch reads KMSKS. Residue lysine 348 participates in ATP binding. Positions 568 to 604 are disordered; that stretch reads PAAATAPAKDAKPAKEAGSQQRHAEKQQHAAGVSETA. The tRNA-binding domain maps to 612–723; it reads DFTKVDLRIA…EGAQAGMRVK (112 aa).

This sequence belongs to the class-I aminoacyl-tRNA synthetase family. MetG type 1 subfamily. In terms of assembly, homodimer. It depends on Zn(2+) as a cofactor.

It is found in the cytoplasm. The enzyme catalyses tRNA(Met) + L-methionine + ATP = L-methionyl-tRNA(Met) + AMP + diphosphate. Is required not only for elongation of protein synthesis but also for the initiation of all mRNA translation through initiator tRNA(fMet) aminoacylation. This is Methionine--tRNA ligase from Azoarcus sp. (strain BH72).